We begin with the raw amino-acid sequence, 277 residues long: Bis(5'-nucleosyl)-tetraphosphatase, symmetrical (277 aa).

This sequence belongs to the Ap4A hydrolase family.

The enzyme catalyses P(1),P(4)-bis(5'-adenosyl) tetraphosphate + H2O = 2 ADP + 2 H(+). In terms of biological role, hydrolyzes diadenosine 5',5'''-P1,P4-tetraphosphate to yield ADP. The chain is Bis(5'-nucleosyl)-tetraphosphatase, symmetrical from Methylobacillus flagellatus (strain ATCC 51484 / DSM 6875 / VKM B-1610 / KT).